The primary structure comprises 365 residues: Putative chalcone synthase (365 aa).

The active site involves C144.

Belongs to the thiolase-like superfamily. Chalcone/stilbene synthases family.

The catalysed reaction is (E)-4-coumaroyl-CoA + 3 malonyl-CoA + 3 H(+) = 2',4,4',6'-tetrahydroxychalcone + 3 CO2 + 4 CoA. The chain is Putative chalcone synthase (bcsA) from Bacillus subtilis (strain 168).